The chain runs to 95 residues: Aspartyl/glutamyl-tRNA(Asn/Gln) amidotransferase subunit C (95 aa).

The protein belongs to the GatC family. Heterotrimer of A, B and C subunits.

The enzyme catalyses L-glutamyl-tRNA(Gln) + L-glutamine + ATP + H2O = L-glutaminyl-tRNA(Gln) + L-glutamate + ADP + phosphate + H(+). It carries out the reaction L-aspartyl-tRNA(Asn) + L-glutamine + ATP + H2O = L-asparaginyl-tRNA(Asn) + L-glutamate + ADP + phosphate + 2 H(+). Allows the formation of correctly charged Asn-tRNA(Asn) or Gln-tRNA(Gln) through the transamidation of misacylated Asp-tRNA(Asn) or Glu-tRNA(Gln) in organisms which lack either or both of asparaginyl-tRNA or glutaminyl-tRNA synthetases. The reaction takes place in the presence of glutamine and ATP through an activated phospho-Asp-tRNA(Asn) or phospho-Glu-tRNA(Gln). The protein is Aspartyl/glutamyl-tRNA(Asn/Gln) amidotransferase subunit C of Desulfosudis oleivorans (strain DSM 6200 / JCM 39069 / Hxd3) (Desulfococcus oleovorans).